A 92-amino-acid chain; its full sequence is Beta-2-microglobulin (92 aa).

The 90-residue stretch at 2–91 (PQIQVYTRHP…VSMKEPKTVN (90 aa)) folds into the Ig-like C1-type domain. A disulfide bridge connects residues cysteine 22 and cysteine 77.

The protein belongs to the beta-2-microglobulin family. Heterodimer of an alpha chain and a beta chain. Beta-2-microglobulin is the beta-chain of major histocompatibility complex class I molecules.

Its subcellular location is the secreted. Functionally, component of the class I major histocompatibility complex (MHC). Involved in the presentation of peptide antigens to the immune system. The protein is Beta-2-microglobulin (B2m) of Mus caroli (Ryukyu mouse).